The chain runs to 486 residues: UDP-N-acetylmuramate--L-alanine ligase (486 aa).

129-135 (GTHGKTT) contacts ATP.

It belongs to the MurCDEF family.

It is found in the cytoplasm. It carries out the reaction UDP-N-acetyl-alpha-D-muramate + L-alanine + ATP = UDP-N-acetyl-alpha-D-muramoyl-L-alanine + ADP + phosphate + H(+). It participates in cell wall biogenesis; peptidoglycan biosynthesis. In terms of biological role, cell wall formation. This Vibrio vulnificus (strain CMCP6) protein is UDP-N-acetylmuramate--L-alanine ligase.